We begin with the raw amino-acid sequence, 216 residues long: Probable GTP-binding protein EngB (216 aa).

The region spanning 27-201 is the EngB-type G domain; the sequence is EGIEVAFAGR…REKLDTWFSE (175 aa). Residues 35–42, 62–66, 80–83, 147–150, and 180–182 contribute to the GTP site; these read GRSNAGKS, GRTQL, DLPG, TKAD, and FSS. Mg(2+) contacts are provided by Ser42 and Thr64.

This sequence belongs to the TRAFAC class TrmE-Era-EngA-EngB-Septin-like GTPase superfamily. EngB GTPase family. It depends on Mg(2+) as a cofactor.

Its function is as follows. Necessary for normal cell division and for the maintenance of normal septation. In Yersinia pestis bv. Antiqua (strain Angola), this protein is Probable GTP-binding protein EngB.